Reading from the N-terminus, the 158-residue chain is Cyclic pyranopterin monophosphate synthase (158 aa).

Substrate is bound by residues 75–77 (LCH) and 113–114 (ME). Residue D128 is part of the active site.

It belongs to the MoaC family. As to quaternary structure, homohexamer; trimer of dimers.

It catalyses the reaction (8S)-3',8-cyclo-7,8-dihydroguanosine 5'-triphosphate = cyclic pyranopterin phosphate + diphosphate. It functions in the pathway cofactor biosynthesis; molybdopterin biosynthesis. Functionally, catalyzes the conversion of (8S)-3',8-cyclo-7,8-dihydroguanosine 5'-triphosphate to cyclic pyranopterin monophosphate (cPMP). This is Cyclic pyranopterin monophosphate synthase from Ralstonia nicotianae (strain ATCC BAA-1114 / GMI1000) (Ralstonia solanacearum).